The sequence spans 342 residues: Mitochondrial sorting homolog (342 aa).

Residues 1 to 6 lie on the Mitochondrial intermembrane side of the membrane; sequence MTDRNE. A helical membrane pass occupies residues 7 to 25; it reads LIGVAIRVVAAAAVSFLSV. The Cytoplasmic segment spans residues 26 to 342; it reads RYLVKYLDPN…AHLLVEETLD (317 aa). 124-131 is a binding site for ATP; it reads GPPGCGKT.

Belongs to the AAA ATPase family.

The protein resides in the mitochondrion outer membrane. Involved in intramitochondrial sorting of proteins. This chain is Mitochondrial sorting homolog (mspn-1), found in Caenorhabditis elegans.